An 88-amino-acid polypeptide reads, in one-letter code: ATP synthase F(0) complex subunit f, mitochondrial (88 aa).

Ala-2 carries the N-acetylalanine modification. Phosphoserine is present on Ser-3. Lys-16 is subject to N6-acetyllysine. Residues 62–79 (MVLAAYVVFSYCISYKEL) traverse the membrane as a helical segment.

This sequence belongs to the ATPase F chain family. In terms of assembly, component of the ATP synthase complex composed at least of ATP5F1A/subunit alpha, ATP5F1B/subunit beta, ATP5MC1/subunit c (homooctomer), MT-ATP6/subunit a, MT-ATP8/subunit 8, ATP5ME/subunit e, ATP5MF/subunit f, ATP5MG/subunit g, ATP5MK/subunit k, ATP5MJ/subunit j, ATP5F1C/subunit gamma, ATP5F1D/subunit delta, ATP5F1E/subunit epsilon, ATP5PF/subunit F6, ATP5PB/subunit b, ATP5PD/subunit d, ATP5PO/subunit OSCP. ATP synthase complex consists of a soluble F(1) head domain (subunits alpha(3) and beta(3)) - the catalytic core - and a membrane F(0) domain - the membrane proton channel (subunits c, a, 8, e, f, g, k and j). These two domains are linked by a central stalk (subunits gamma, delta, and epsilon) rotating inside the F1 region and a stationary peripheral stalk (subunits F6, b, d, and OSCP).

The protein localises to the mitochondrion. The protein resides in the mitochondrion inner membrane. Its function is as follows. Subunit f, of the mitochondrial membrane ATP synthase complex (F(1)F(0) ATP synthase or Complex V) that produces ATP from ADP in the presence of a proton gradient across the membrane which is generated by electron transport complexes of the respiratory chain. ATP synthase complex consist of a soluble F(1) head domain - the catalytic core - and a membrane F(1) domain - the membrane proton channel. These two domains are linked by a central stalk rotating inside the F(1) region and a stationary peripheral stalk. During catalysis, ATP synthesis in the catalytic domain of F(1) is coupled via a rotary mechanism of the central stalk subunits to proton translocation. In vivo, can only synthesize ATP although its ATP hydrolase activity can be activated artificially in vitro. Part of the complex F(0) domain. This is ATP synthase F(0) complex subunit f, mitochondrial from Mus musculus (Mouse).